Reading from the N-terminus, the 300-residue chain is Metal tolerance protein 12 (300 aa).

Residues 1–26 are Cytoplasmic-facing; the sequence is MESPESFSTMFMKPIRHILSEKKSRK. Residues 27 to 47 form a helical membrane-spanning segment; that stretch reads IALFLLINTAYMVVEFVAGFM. Over 48–50 the chain is Vacuolar; sequence SNS. A helical membrane pass occupies residues 51–71; the sequence is LGLISDACHMLFDCAALAIGL. Over 72–91 the chain is Cytoplasmic; it reads YASYISRLPANHQYNYGRGR. The helical transmembrane segment at 92–112 threads the bilayer; sequence FEVLSGYVNAVFLVLVGALIV. Over 113–128 the chain is Vacuolar; sequence LESIERILDPQEISTN. The helical transmembrane segment at 129 to 149 threads the bilayer; it reads SLLVVSVGGLLVNIVGLIFFH. The Cytoplasmic portion of the chain corresponds to 150–160; sequence EEHHHAHGGSG. Residues 161–181 traverse the membrane as a helical segment; that stretch reads IFLHVLADTMGSVGVVISTLL. Over 182–186 the chain is Vacuolar; the sequence is IKYKG. A helical membrane pass occupies residues 187–207; the sequence is WLVADPASSIFISILIIASVI. At 208 to 300 the chain is on the cytoplasmic side; the sequence is PLLRNSAEIL…WTLQVESVNS (93 aa).

This sequence belongs to the cation diffusion facilitator (CDF) transporter (TC 2.A.4) family. SLC30A subfamily.

The protein localises to the vacuole membrane. Involved in sequestration of excess metal in the cytoplasm into vacuoles to maintain metal homeostasis. This is Metal tolerance protein 12 (MTP12) from Arabidopsis thaliana (Mouse-ear cress).